A 470-amino-acid chain; its full sequence is Box C/D snoRNA protein 1 (470 aa).

The disordered stretch occupies residues 1 to 70 (MEFAAENEGK…EEGSGQRPEE (70 aa)). A Phosphoserine modification is found at Ser25. Residues 41 to 51 (EFGGGEEGTGL) are compositionally biased toward gly residues. Glycyl lysine isopeptide (Lys-Gly) (interchain with G-Cter in SUMO2) cross-links involve residues Lys79, Lys108, Lys118, Lys138, Lys143, Lys153, Lys162, Lys173, Lys183, and Lys200. Zn(2+)-binding residues include Cys220, Cys223, Cys232, Cys235, Cys240, Cys244, His248, and Cys254. Residues 220-254 (CETCGTEEAKYRCPRCMRYSCSLPCVKKHKAELTC) form an HIT-type zinc finger. Lys459 is covalently cross-linked (Glycyl lysine isopeptide (Lys-Gly) (interchain with G-Cter in SUMO2)).

The protein belongs to the BCD1 family. In terms of assembly, interacts with FBL, SNU13, NOP58, NUFIP1, RUVBL1, RUVBL2 and TAF9. Interacts (via HIT-type zinc finger) with the RUVBL1/RUVBL2 complex in the presence of ADP.

Functionally, required for box C/D snoRNAs accumulation involved in snoRNA processing, snoRNA transport to the nucleolus and ribosome biogenesis. The protein is Box C/D snoRNA protein 1 (ZNHIT6) of Homo sapiens (Human).